A 175-amino-acid polypeptide reads, in one-letter code: Cytochrome c-550-like protein (175 aa).

The first 34 residues, 1–34 (MYQPHFWQRSIGWLCGGLLILLLGWTIAPATALA), serve as a signal peptide directing secretion. Residues cysteine 81, cysteine 84, histidine 85, and cysteine 135 each contribute to the heme c site.

The protein belongs to the cytochrome c family. PsbV subfamily. Heme c serves as cofactor.

The protein localises to the cellular thylakoid membrane. In terms of biological role, probable low-potential cytochrome c, can partially replace cytochrome c-550 (PsbV) function. This chain is Cytochrome c-550-like protein, found in Thermosynechococcus vestitus (strain NIES-2133 / IAM M-273 / BP-1).